The sequence spans 792 residues: Leucine--tRNA ligase (792 aa).

Residues 39–50 carry the 'HIGH' region motif; that stretch reads PYPSAAGLHLGH. Residues 569–573 carry the 'KMSKS' region motif; it reads KMSKS. Lys572 contributes to the ATP binding site.

The protein belongs to the class-I aminoacyl-tRNA synthetase family.

It is found in the cytoplasm. The enzyme catalyses tRNA(Leu) + L-leucine + ATP = L-leucyl-tRNA(Leu) + AMP + diphosphate. The chain is Leucine--tRNA ligase from Mycoplasma genitalium (strain ATCC 33530 / DSM 19775 / NCTC 10195 / G37) (Mycoplasmoides genitalium).